The primary structure comprises 750 residues: Photosystem I P700 chlorophyll a apoprotein A1 (750 aa).

The next 8 membrane-spanning stretches (helical) occupy residues 70–93, 156–179, 195–219, 291–309, 346–369, 385–411, 433–455, and 531–549; these read VFSA…FHGA, LYCT…FHYH, LNHH…HVSL, IAHH…GHMY, WHAQ…HHMY, LSLF…IFMV, AIIS…LYIH, and FLVH…LILL. C573 and C582 together coordinate [4Fe-4S] cluster. The next 2 helical transmembrane spans lie at 589-610 and 664-686; these read HVFL…HFSW and LSAY…MFLF. Position 675 (H675) interacts with chlorophyll a'. Residues M683 and Y691 each coordinate chlorophyll a. W692 lines the phylloquinone pocket. A helical membrane pass occupies residues 724–744; the sequence is AVGVTHYLLGGIATTWAFFLA.

The protein belongs to the PsaA/PsaB family. The PsaA/B heterodimer binds the P700 chlorophyll special pair and subsequent electron acceptors. PSI consists of a core antenna complex that captures photons, and an electron transfer chain that converts photonic excitation into a charge separation. The eukaryotic PSI reaction center is composed of at least 11 subunits. P700 is a chlorophyll a/chlorophyll a' dimer, A0 is one or more chlorophyll a, A1 is one or both phylloquinones and FX is a shared 4Fe-4S iron-sulfur center. is required as a cofactor.

The protein resides in the plastid. It is found in the chloroplast thylakoid membrane. The catalysed reaction is reduced [plastocyanin] + hnu + oxidized [2Fe-2S]-[ferredoxin] = oxidized [plastocyanin] + reduced [2Fe-2S]-[ferredoxin]. PsaA and PsaB bind P700, the primary electron donor of photosystem I (PSI), as well as the electron acceptors A0, A1 and FX. PSI is a plastocyanin-ferredoxin oxidoreductase, converting photonic excitation into a charge separation, which transfers an electron from the donor P700 chlorophyll pair to the spectroscopically characterized acceptors A0, A1, FX, FA and FB in turn. Oxidized P700 is reduced on the lumenal side of the thylakoid membrane by plastocyanin. The protein is Photosystem I P700 chlorophyll a apoprotein A1 of Arabis hirsuta (Hairy rock-cress).